The primary structure comprises 271 residues: MAKVPDMFEDLKNCYSENEEVSSSIDHLSLNQKSFYDVSYGPLHEGCMDQSVSLSISEISKTSKLTFKQSMVVVSTNGKVLKKRRLSLSQSITDNNLEAIANDSEEEIIKPRSAPFSFLSNMTYHFIRIIKHEFILNDTLNQTIIRANDQYLTAAAIHNLDEAVKFDMGAYTSSKDDTKVPVILRISKTQLYVSAQDEDQPVLLKEMPEIPKTITGSETNFLFFWETHGTKNYFISVAHPNLFIATKHDNWVCLAKGLPSITDFQILENQA.

A propeptide spanning residues 1 to 112 is cleaved from the precursor; it reads MAKVPDMFED…DSEEEIIKPR (112 aa). Lys82 carries the N6-acetyllysine modification. The nuclear localization signal (NLS) stretch occupies residues 82–86; sequence KKRRL. Phosphoserine is present on Ser87. Residues Asn102, Asn121, Asn137, and Asn141 are each glycosylated (N-linked (GlcNAc...) asparagine).

Belongs to the IL-1 family. In terms of assembly, monomer. Interacts with TMED10; the interaction mediates the translocation from the cytoplasm into the ERGIC (endoplasmic reticulum-Golgi intermediate compartment) and thereby secretion. Interacts with IL1R1. Interacts with S100A13; this interaction is the first step in the export of IL1A, followed by direct translocation of this complex across the plasma membrane. Post-translationally, acetylated within its nuclear localization sequence, which impacts subcellular localization. Proteolytic processed by CAPN1 in a calcium-dependent manner. Cleavage from 31 kDa precursor to 18 kDa biologically active molecules. In terms of processing, phosphorylated. Phosphorylation greatly enhances susceptibility to digestion and promotes the conversion of pre-IL1A alpha to the biologically active IL1A.

It is found in the nucleus. The protein localises to the cytoplasm. It localises to the secreted. Functionally, cytokine constitutively present intracellularly in nearly all resting non-hematopoietic cells that plays an important role in inflammation and bridges the innate and adaptive immune systems. After binding to its receptor IL1R1 together with its accessory protein IL1RAP, forms the high affinity interleukin-1 receptor complex. Signaling involves the recruitment of adapter molecules such as MYD88, IRAK1 or IRAK4. In turn, mediates the activation of NF-kappa-B and the three MAPK pathways p38, p42/p44 and JNK pathways. Within the cell, acts as an alarmin and cell death results in its liberation in the extracellular space after disruption of the cell membrane to induce inflammation and alert the host to injury or damage. In addition to its role as a danger signal, which occurs when the cytokine is passively released by cell necrosis, directly senses DNA damage and acts as signal for genotoxic stress without loss of cell integrity. In Macaca fascicularis (Crab-eating macaque), this protein is Interleukin-1 alpha (IL1A).